Here is a 1196-residue protein sequence, read N- to C-terminus: Homeodomain-interacting protein kinase 2 (1196 aa).

A Phosphoserine modification is found at Ser-16. Lys-32 is covalently cross-linked (Glycyl lysine isopeptide (Lys-Gly) (interchain with G-Cter in SUMO); alternate). Lys-32 participates in a covalent cross-link: Glycyl lysine isopeptide (Lys-Gly) (interchain with G-Cter in SUMO2); alternate. A disordered region spans residues 50–69 (VYSQSKNIPPSQPASTTVST). The transcriptional corepression stretch occupies residues 97–230 (SASSTSVTGQ…TNEIVAIKIL (134 aa)). Ser-118 and Ser-135 each carry phosphoserine. Residue Thr-141 is modified to Phosphothreonine. Residues 189-520 (HEVLCSMTNT…DADKRVTPIE (332 aa)) are interaction with DAXX. The Protein kinase domain occupies 199–527 (YEVLEFLGRG…PIETLNHPFV (329 aa)). ATP is bound by residues 205 to 213 (LGRGTFGQV) and Lys-228. Phosphothreonine is present on residues Thr-252 and Thr-273. Asp-324 acts as the Proton acceptor in catalysis. At Tyr-361 the chain carries Phosphotyrosine; by autocatalysis. Ser-441 bears the Phosphoserine mark. 3 positions are modified to phosphothreonine: Thr-482, Thr-517, and Thr-566. Residues 539-844 (AHVKSCFQNM…KENTPPRCAM (306 aa)) are interaction with SKI and SMAD1. The tract at residues 600–800 (SATLSLANPE…MRQQPTSTTS (201 aa)) is interaction with DAZAP2. Residues Ser-634 and Ser-668 each carry the phosphoserine modification. Thr-687 carries the post-translational modification Phosphothreonine. Residues 752–897 (RNTHAHGSHY…ITISSDTDEE (146 aa)) are interaction with POU4F1. The interaction with CTBP1 stretch occupies residues 774–876 (HVTLPAAQPL…TRERQRQTIV (103 aa)). The interval 787-897 (VAHVMRQQPT…ITISSDTDEE (111 aa)) is interaction with HMGA1. 2 disordered regions span residues 792–847 (RQQP…MVHS) and 891–963 (SSDT…CTGN). Positions 793–829 (QQPTSTTSSRKSKQHQSSVRNVSTCEVTSSQAISSPQ) are enriched in polar residues. Positions 802–805 (RKSK) match the Nuclear localization signal 1 (NLS1) motif. Residues Ser-815 and Ser-827 each carry the phosphoserine modification. Positions 832 to 835 (KRVK) match the Nuclear localization signal 2 (NLS2) motif. Residues 839–934 (PPRCAMVHSS…PYSDSSSNTS (96 aa)) are interaction with TP53 and TP73. The segment at 873–907 (QTIVIPDTPSPTVSVITISSDTDEEEEQKHAPTST) is interaction with UBE2I. Residues 873-980 (QTIVIPDTPS…PLKTQASEVL (108 aa)) are localization to nuclear speckles. Residues 873-980 (QTIVIPDTPS…PLKTQASEVL (108 aa)) form a required for localization to nuclear speckles region. The segment at 884–908 (TVSVITISSDTDEEEEQKHAPTSTV) is SUMO interaction motifs (SIM); required for nuclear localization and kinase activity. Residues 923-937 (DSPYSDSSSNTSPYS) are compositionally biased toward low complexity. A Phosphoserine modification is found at Ser-934. The interval 935–1050 (PYSVQQRTGH…LSQAQQHMAA (116 aa)) is interaction with AXIN1. A compositionally biased stretch (polar residues) spans 938 to 951 (VQQRTGHNGTNTLD). Glycyl lysine isopeptide (Lys-Gly) (interchain with G-Cter in SUMO2) cross-links involve residues Lys-953 and Lys-973. Positions 984-1196 (DSLGPAISAS…PAKVNQYPYI (213 aa)) are autoinhibitory domain (AID). Phosphoserine is present on residues Ser-991, Ser-993, Ser-1042, Ser-1153, and Ser-1186. A compositionally biased stretch (low complexity) spans 991 to 1046 (SASHHSSSFKSKSSSTVTSTSGHSSGSSSGAIAYRQQRPGPHFQQQQPLNLSQAQQ). The tract at residues 991 to 1058 (SASHHSSSFK…AADRTGSHRR (68 aa)) is disordered. Lys-1189 is covalently cross-linked (Glycyl lysine isopeptide (Lys-Gly) (interchain with G-Cter in SUMO)).

Belongs to the protein kinase superfamily. CMGC Ser/Thr protein kinase family. HIPK subfamily. In terms of assembly, interacts with CREB1, SIAH1, WSB1, CBX4, TRADD, p53/TP53, TP73, TP63, CREBBP, DAXX, P53DINP1, SKI, SMAD1, SMAD2 and SMAD3, but not SMAD4. Interacts with SP100; positively regulates TP53-dependent transcription. Interacts with ATF1, PML, RUNX1, EP300, NKX1-2, NKX2-5, UBE2I, HMGA1, CTBP1, AXIN1, NLK, MYB, POU4F1, POU4F2, POU4F3, UBE2I, UBL1 and ZBTB4. Probably part of a complex consisting of p53/TP53, HIPK2 and AXIN1. Interacts with DAZAP2; the interaction results in phosphorylation of DAZAP2 which causes localization of DAZAP2 to the nucleus, reduces interaction of DAZAP2 with HIPK2 and prevents DAZAP2-dependent degradation of HIPK2. Interacts with SIAH1; the interaction is promoted by DAZAP2 and results in SIAH1-mediated ubiquitination and subsequent proteasomal degradation of HIPK2. As to quaternary structure, interacts with SPN/CD43 cytoplasmic tail. Sumoylated. When conjugated it is directed to nuclear speckles. Desumoylated by SENP1. Sumoylation on Lys-32 is promoted by the E3 SUMO-protein ligase CBX4. Post-translationally, autophosphorylation at Tyr-361 in the activation loop activates the kinase and promotes nuclear localization. In terms of processing, ubiquitinated by FBXO3, WSB1 and SIAH1, leading to rapid proteasome-dependent degradation. The degradation mediated by FBXO3, but not ubiquitination, is prevented in the presence of PML. The degradation mediated by WSB1 and SIAH1 is reversibly reduced upon DNA damage. Cleaved at Asp-923 and Asp-984 by CASP6 in a p53/TP53-dependent manner. The cleaved form lacks the autoinhibitory C-terminal domain (AID), resulting in a hyperactive kinase, which potentiates p53/TP53 Ser-46 phosphorylation and subsequent activation of the cell death machinery. As to expression, ubiquitous. Abundant in muscle, heart, small intestine, stomach, kidney and brain; and low in testis, skin and lung.

The protein resides in the nucleus. It is found in the PML body. Its subcellular location is the cytoplasm. The catalysed reaction is L-seryl-[protein] + ATP = O-phospho-L-seryl-[protein] + ADP + H(+). The enzyme catalyses L-threonyl-[protein] + ATP = O-phospho-L-threonyl-[protein] + ADP + H(+). Its function is as follows. Serine/threonine-protein kinase involved in transcription regulation, p53/TP53-mediated cellular apoptosis and regulation of the cell cycle. Acts as a corepressor of several transcription factors, including SMAD1 and POU4F1/Brn3a and probably NK homeodomain transcription factors. Phosphorylates PDX1, ATF1, PML, p53/TP53, CREB1, CTBP1, CBX4, RUNX1, EP300, CTNNB1, HMGA1, ZBTB4 and DAZAP2. Inhibits cell growth and promotes apoptosis through the activation of p53/TP53 both at the transcription level and at the protein level (by phosphorylation and indirect acetylation). The phosphorylation of p53/TP53 may be mediated by a p53/TP53-HIPK2-AXIN1 complex. Involved in the response to hypoxia by acting as a transcriptional co-suppressor of HIF1A. Mediates transcriptional activation of TP73. In response to TGFB, cooperates with DAXX to activate JNK. Negative regulator through phosphorylation and subsequent proteasomal degradation of CTNNB1 and the antiapoptotic factor CTBP1. In the Wnt/beta-catenin signaling pathway acts as an intermediate kinase between MAP3K7/TAK1 and NLK to promote the proteasomal degradation of MYB. Phosphorylates CBX4 upon DNA damage and promotes its E3 SUMO-protein ligase activity. Activates CREB1 and ATF1 transcription factors by phosphorylation in response to genotoxic stress. In response to DNA damage, stabilizes PML by phosphorylation. PML, HIPK2 and FBXO3 may act synergically to activate p53/TP53-dependent transactivation. Promotes angiogenesis, and is involved in erythroid differentiation, especially during fetal liver erythropoiesis. Phosphorylation of RUNX1 and EP300 stimulates EP300 transcription regulation activity. Triggers ZBTB4 protein degradation in response to DNA damage. In response to DNA damage, phosphorylates DAZAP2 which localizes DAZAP2 to the nucleus, reduces interaction of DAZAP2 with HIPK2 and prevents DAZAP2-dependent ubiquitination of HIPK2 by E3 ubiquitin-protein ligase SIAH1 and subsequent proteasomal degradation. Modulates HMGA1 DNA-binding affinity. In response to high glucose, triggers phosphorylation-mediated subnuclear localization shifting of PDX1. Involved in the regulation of eye size, lens formation and retinal lamination during late embryogenesis. In Mus musculus (Mouse), this protein is Homeodomain-interacting protein kinase 2 (Hipk2).